The following is a 482-amino-acid chain: Glutamate--tRNA ligase 1 (482 aa).

Positions 18–28 (PSPTGYLHLGG) match the 'HIGH' region motif. The 'KMSKS' region signature appears at 252–256 (KLSKR). Residue Lys255 coordinates ATP.

The protein belongs to the class-I aminoacyl-tRNA synthetase family. Glutamate--tRNA ligase type 1 subfamily. Monomer.

It is found in the cytoplasm. It carries out the reaction tRNA(Glu) + L-glutamate + ATP = L-glutamyl-tRNA(Glu) + AMP + diphosphate. Functionally, catalyzes the attachment of glutamate to tRNA(Glu) in a two-step reaction: glutamate is first activated by ATP to form Glu-AMP and then transferred to the acceptor end of tRNA(Glu). This chain is Glutamate--tRNA ligase 1, found in Erythrobacter litoralis (strain HTCC2594).